We begin with the raw amino-acid sequence, 189 residues long: Rho-related protein racM (189 aa).

A GTP-binding site is contributed by 12–19; the sequence is GDYGVGKT. The short motif at 35-43 is the Effector region element; that stretch reads YVPTALDNF. GTP-binding positions include 60–64 and 118–121; these read DTAGG and TKID. Position 186 is a cysteine methyl ester (Cys-186). Cys-186 is lipidated: S-geranylgeranyl cysteine. The propeptide at 187–189 is removed in mature form; sequence IIL.

Belongs to the small GTPase superfamily. Rho family.

It is found in the cell membrane. The sequence is that of Rho-related protein racM (racM) from Dictyostelium discoideum (Social amoeba).